The sequence spans 374 residues: tRNA-specific 2-thiouridylase MnmA (374 aa).

ATP is bound by residues 13 to 20 (GMSGGVDS) and M39. Residues 99–101 (NPD) form an interaction with target base in tRNA region. Catalysis depends on C104, which acts as the Nucleophile. C104 and C201 form a disulfide bridge. ATP is bound at residue G128. The tract at residues 151–153 (KDQ) is interaction with tRNA. C201 acts as the Cysteine persulfide intermediate in catalysis. Residues 313–314 (RY) form an interaction with tRNA region.

This sequence belongs to the MnmA/TRMU family.

The protein resides in the cytoplasm. It carries out the reaction S-sulfanyl-L-cysteinyl-[protein] + uridine(34) in tRNA + AH2 + ATP = 2-thiouridine(34) in tRNA + L-cysteinyl-[protein] + A + AMP + diphosphate + H(+). In terms of biological role, catalyzes the 2-thiolation of uridine at the wobble position (U34) of tRNA, leading to the formation of s(2)U34. This is tRNA-specific 2-thiouridylase MnmA from Streptococcus equi subsp. equi (strain 4047).